A 333-amino-acid polypeptide reads, in one-letter code: 5-formaminoimidazole-4-carboxamide-1-(beta)-D-ribofuranosyl 5'-monophosphate synthetase (333 aa).

Residues His20 and Ser85 each contribute to the 5-amino-1-(5-phospho-beta-D-ribosyl)imidazole-4-carboxamide site. The ATP-grasp domain maps to 106–313; sequence RELIKWEADQ…YFDRPMDMGE (208 aa). Residues 136–187 and Glu209 contribute to the ATP site; that span reads PEEV…VPAY. Asn229 contributes to the 5-amino-1-(5-phospho-beta-D-ribosyl)imidazole-4-carboxamide binding site. Positions 268 and 281 each coordinate Mg(2+).

It belongs to the phosphohexose mutase family. The cofactor is Mg(2+). Requires Mn(2+) as cofactor.

The enzyme catalyses 5-amino-1-(5-phospho-beta-D-ribosyl)imidazole-4-carboxamide + formate + ATP = 5-formamido-1-(5-phospho-D-ribosyl)imidazole-4-carboxamide + ADP + phosphate. Its pathway is purine metabolism; IMP biosynthesis via de novo pathway; 5-formamido-1-(5-phospho-D-ribosyl)imidazole-4-carboxamide from 5-amino-1-(5-phospho-D-ribosyl)imidazole-4-carboxamide (formate route): step 1/1. Its function is as follows. Catalyzes the ATP- and formate-dependent formylation of 5-aminoimidazole-4-carboxamide-1-beta-d-ribofuranosyl 5'-monophosphate (AICAR) to 5-formaminoimidazole-4-carboxamide-1-beta-d-ribofuranosyl 5'-monophosphate (FAICAR) in the absence of folates. This is 5-formaminoimidazole-4-carboxamide-1-(beta)-D-ribofuranosyl 5'-monophosphate synthetase from Pyrobaculum islandicum (strain DSM 4184 / JCM 9189 / GEO3).